Reading from the N-terminus, the 133-residue chain is Small heat shock protein ibp (133 aa).

Positions 11-126 (EQPLSENPNY…KPKKISINEE (116 aa)) constitute a sHSP domain.

This sequence belongs to the small heat shock protein (HSP20) family.

The sequence is that of Small heat shock protein ibp (ibp) from Wigglesworthia glossinidia brevipalpis.